A 452-amino-acid polypeptide reads, in one-letter code: Phosphoglucosamine mutase (452 aa).

The active-site Phosphoserine intermediate is Ser-88. Residues Ser-88, Asp-234, Asp-236, and Asp-238 each coordinate Mg(2+). Ser-88 carries the phosphoserine modification.

This sequence belongs to the phosphohexose mutase family. Requires Mg(2+) as cofactor. In terms of processing, activated by phosphorylation.

The enzyme catalyses alpha-D-glucosamine 1-phosphate = D-glucosamine 6-phosphate. Catalyzes the conversion of glucosamine-6-phosphate to glucosamine-1-phosphate. The polypeptide is Phosphoglucosamine mutase (Methanococcus aeolicus (strain ATCC BAA-1280 / DSM 17508 / OCM 812 / Nankai-3)).